Here is a 443-residue protein sequence, read N- to C-terminus: Xaa-Pro dipeptidase (443 aa).

Residues aspartate 246, aspartate 257, histidine 339, glutamate 384, and glutamate 423 each contribute to the Mn(2+) site.

This sequence belongs to the peptidase M24B family. Bacterial-type prolidase subfamily. Mn(2+) serves as cofactor.

It catalyses the reaction Xaa-L-Pro dipeptide + H2O = an L-alpha-amino acid + L-proline. In terms of biological role, splits dipeptides with a prolyl residue in the C-terminal position. This is Xaa-Pro dipeptidase from Escherichia coli O8 (strain IAI1).